Reading from the N-terminus, the 491-residue chain is Glutamyl-tRNA(Gln) amidotransferase subunit A (491 aa).

Active-site charge relay system residues include Lys-79 and Ser-158. Ser-182 serves as the catalytic Acyl-ester intermediate.

Belongs to the amidase family. GatA subfamily. In terms of assembly, heterotrimer of A, B and C subunits.

It carries out the reaction L-glutamyl-tRNA(Gln) + L-glutamine + ATP + H2O = L-glutaminyl-tRNA(Gln) + L-glutamate + ADP + phosphate + H(+). Functionally, allows the formation of correctly charged Gln-tRNA(Gln) through the transamidation of misacylated Glu-tRNA(Gln) in organisms which lack glutaminyl-tRNA synthetase. The reaction takes place in the presence of glutamine and ATP through an activated gamma-phospho-Glu-tRNA(Gln). In Anaplasma phagocytophilum (strain HZ), this protein is Glutamyl-tRNA(Gln) amidotransferase subunit A.